A 548-amino-acid polypeptide reads, in one-letter code: ComP-specific O-oligosaccharyltransferase (548 aa).

The next 12 helical transmembrane spans lie at 8 to 28, 32 to 52, 68 to 88, 91 to 111, 119 to 139, 164 to 184, 189 to 209, 213 to 233, 239 to 259, 331 to 351, 363 to 383, and 418 to 438; these read IKNYTIVSGVFFLGSAFIIPN, LSSTLYKELIAVLGLLILLTV, WFLFVIFIIFIQLIVGEIYFF, FFFSISFLVILFLSFLLGFNE, IVKKIAWIFIIVVQISFLIAI, LGQPNQFSTLILITLFLLCYL, SLNNMVFNILSFCLIFANVMT, SAWISVILISLLYLLKFQKKI, IFFNIVFWTLVYCVPLLFNLI, MLWNGFFIGLIISILILCFLI, LFLFFCVVAFFVHCLLEYPFA, and TLFLGCCWLGYVAFWVEVLDI.

The protein belongs to the PglL O-oligosaccharyltransferase family.

The protein resides in the cell membrane. In terms of biological role, specifically catalyzes the glycosylation of the pilin-like competence factor ComP. The protein is ComP-specific O-oligosaccharyltransferase of Acinetobacter baylyi (strain ATCC 33305 / BD413 / ADP1).